Here is a 154-residue protein sequence, read N- to C-terminus: SsrA-binding protein (154 aa).

The protein belongs to the SmpB family.

It is found in the cytoplasm. In terms of biological role, required for rescue of stalled ribosomes mediated by trans-translation. Binds to transfer-messenger RNA (tmRNA), required for stable association of tmRNA with ribosomes. tmRNA and SmpB together mimic tRNA shape, replacing the anticodon stem-loop with SmpB. tmRNA is encoded by the ssrA gene; the 2 termini fold to resemble tRNA(Ala) and it encodes a 'tag peptide', a short internal open reading frame. During trans-translation Ala-aminoacylated tmRNA acts like a tRNA, entering the A-site of stalled ribosomes, displacing the stalled mRNA. The ribosome then switches to translate the ORF on the tmRNA; the nascent peptide is terminated with the 'tag peptide' encoded by the tmRNA and targeted for degradation. The ribosome is freed to recommence translation, which seems to be the essential function of trans-translation. The sequence is that of SsrA-binding protein from Acetivibrio thermocellus (strain ATCC 27405 / DSM 1237 / JCM 9322 / NBRC 103400 / NCIMB 10682 / NRRL B-4536 / VPI 7372) (Clostridium thermocellum).